The following is a 269-amino-acid chain: Surfeit locus protein 4 (269 aa).

Helical transmembrane passes span 64-84 (FLASIFVFINLFGQLSGCILV), 92-112 (YACFGLFGIIALQTIAYSILW), 157-177 (MQLGGRVLLVLMFMTLLHFDM), 179-199 (FFYILQNIVGTALIILVAIGF), 203-223 (LAALTLVIWLFGINIYFNAFW), and 242-262 (TMSVIGGLLLVVALGPGGVSM). A Di-lysine motif motif is present at residues 266–269 (KKEW).

This sequence belongs to the SURF4 family.

It localises to the endoplasmic reticulum membrane. The protein resides in the endoplasmic reticulum-Golgi intermediate compartment membrane. Its subcellular location is the golgi apparatus membrane. Functionally, endoplasmic reticulum cargo receptor that mediates the export of lipoproteins by recruiting cargos into COPII vesicles to facilitate their secretion. Acts as a cargo receptor for lipoproteins bearing both APOB and APOA1, thereby regulating lipoprotein delivery and the maintenance of lipid homeostasis. The protein is Surfeit locus protein 4 of Gallus gallus (Chicken).